The chain runs to 505 residues: Nostrin (505 aa).

Positions 1-260 constitute an F-BAR domain; the sequence is MRDPLTDCSY…AISKIDIEKD (260 aa). Coiled-coil stretches lie at residues 101 to 128, 160 to 222, and 295 to 332; these read AHQV…LVIS, ITTE…RIQL, and KERQ…AYSS. Serine 114 is modified (phosphoserine). The REM-1 domain occupies 292-372; sequence AMSKERQTSS…SYKLSSVLAE (81 aa). The region spanning 437 to 496 is the SH3 domain; sequence LGNGLCKALYPFQARQDDELDLEKGDIVTIHKKKDEGWWFGSLKGKKGHFPAAYVEELPL. A Phosphoserine modification is found at serine 478.

As to quaternary structure, homotrimer. Interacts with DAB2. Interacts with NOS3, DNM2, WASL and CAV1. Interacts (via SH3 domain) with DNM2; this interaction allows the recruitment of NOS3 to dynamin-positive structures. Present in pulmonary arterial endothelial cells (at protein level).

It localises to the cell membrane. The protein resides in the cytoplasmic vesicle. Its subcellular location is the cytoplasm. It is found in the cytoskeleton. In terms of biological role, multivalent adapter protein which may decrease NOS3 activity by inducing its translocation away from the plasma membrane. The protein is Nostrin of Bos taurus (Bovine).